Consider the following 372-residue polypeptide: Homoserine dehydrogenase (372 aa).

Residues valine 13, glycine 15, valine 16, and threonine 99 each coordinate NAD(+). Residues valine 16 and threonine 99 each coordinate NADP(+). The NADPH site is built by valine 16, threonine 99, serine 100, and lysine 123. Residue lysine 123 participates in NADP(+) binding. Residues glutamate 150, valine 153, alanine 155, and leucine 157 each coordinate Na(+). NADP(+) contacts are provided by glycine 216 and glutamate 219. L-homoserine contacts are provided by glutamate 219 and aspartate 230. Lysine 234 (proton donor) is an active-site residue. Glycine 352 lines the NAD(+) pocket. Residue glycine 352 coordinates NADP(+). Glycine 352 lines the NADPH pocket.

It belongs to the homoserine dehydrogenase family. As to quaternary structure, homodimer. A metal cation serves as cofactor.

The enzyme catalyses L-homoserine + NADP(+) = L-aspartate 4-semialdehyde + NADPH + H(+). The catalysed reaction is L-homoserine + NAD(+) = L-aspartate 4-semialdehyde + NADH + H(+). The protein operates within amino-acid biosynthesis; L-methionine biosynthesis via de novo pathway; L-homoserine from L-aspartate: step 3/3. It participates in amino-acid biosynthesis; L-threonine biosynthesis; L-threonine from L-aspartate: step 3/5. Functionally, catalyzes the conversion of L-aspartate-beta-semialdehyde (L-Asa) to L-homoserine (L-Hse), the third step in the biosynthesis of amino acids that derive from aspartate (the aspartate family of amino acids), including methioinine and threonine, the latter of which is a precursor to isoleucine; production of homoserine leads to a branch-point in the pathway as it can either be O-phosphorylated for processing to threonine, or O-acylated for processing to methionine. The polypeptide is Homoserine dehydrogenase (Paracoccidioides brasiliensis (strain Pb18)).